Reading from the N-terminus, the 495-residue chain is MSEEMNDQMLVRRQKLQELYDLGIDPFGSKFDRSGLSSDLKEEWDQYSKEELVEKEADSHVAIAGRLMTKRGKGKAGFAHVQDLAGQIQIYVRKDQVGDDEFDLWKNADLGDIVGVEGVMFKTNTGELSVKAKKFTLLTKSLRPLPDKFHGLQDIEQRYRQRYLDLITNEDSTRTFINRSKIIQEMRNYLNNKGFLEVETPMMHQIAGGAAARPFVTHHNALDATLYMRIAIELHLKRLIVGGLEKVYEIGRVFRNEGVSTRHNPEFTMIELYEAYADYHDIMDLTESMVRHIANEVLGSAKVQYNGETIDLESAWTRLHIVDAVKEATGVDFYEVKSDEEAKALAKEHGIEIKDTMKYGHILNEFFEQKVEETLIQPTFIYGHPTEISPLAKKNPEDPRFTDRFELFIVGREHANAFTELNDPIDQKGRFEAQLVEKAQGNDEAHEMDEDYIEALEYGMPPTGGLGIGIDRLVMLLTDSPSIRDVLLFPYMRQK.

The Mg(2+) site is built by E406 and E413.

It belongs to the class-II aminoacyl-tRNA synthetase family. In terms of assembly, homodimer. The cofactor is Mg(2+).

Its subcellular location is the cytoplasm. It carries out the reaction tRNA(Lys) + L-lysine + ATP = L-lysyl-tRNA(Lys) + AMP + diphosphate. The chain is Lysine--tRNA ligase from Staphylococcus aureus (strain COL).